A 682-amino-acid chain; its full sequence is DNA-directed RNA polymerase subunit beta' (682 aa).

Positions 69, 71, 87, and 90 each coordinate Zn(2+). Mg(2+)-binding residues include D489, D491, and D493.

The protein belongs to the RNA polymerase beta' chain family. RpoC1 subfamily. As to quaternary structure, in plastids the minimal PEP RNA polymerase catalytic core is composed of four subunits: alpha, beta, beta', and beta''. When a (nuclear-encoded) sigma factor is associated with the core the holoenzyme is formed, which can initiate transcription. Mg(2+) is required as a cofactor. Requires Zn(2+) as cofactor.

It localises to the plastid. The protein localises to the chloroplast. It carries out the reaction RNA(n) + a ribonucleoside 5'-triphosphate = RNA(n+1) + diphosphate. Its function is as follows. DNA-dependent RNA polymerase catalyzes the transcription of DNA into RNA using the four ribonucleoside triphosphates as substrates. The sequence is that of DNA-directed RNA polymerase subunit beta' from Brachypodium distachyon (Purple false brome).